The following is a 448-amino-acid chain: Multiple inositol polyphosphate phosphatase 1 (448 aa).

The first 19 residues, 1-19 (MAPRRAACLLPLLVAVASA), serve as a signal peptide directing secretion. Histidine 69 is a catalytic residue. N-linked (GlcNAc...) asparagine glycans are attached at residues asparagine 203, asparagine 257, asparagine 409, and asparagine 441. The Prevents secretion from ER motif lies at 445-448 (ADEL).

It belongs to the histidine acid phosphatase family. MINPP1 subfamily. N-glycosylated. As to expression, present in growth plate chondrocytes but not detectable in articular chondrocytes (at protein level). Spatially restricted to chondrocytes in the lower portion of the proliferative zone and the upper portion of the hypertrophic zone in the growth plate of long bones (at protein level). Weakly expressed in kidney, liver, lung, skin and spleen, and not detected in brain, heart and muscle.

The protein localises to the endoplasmic reticulum lumen. Its subcellular location is the secreted. The protein resides in the cell membrane. It carries out the reaction 1D-myo-inositol hexakisphosphate + H2O = 1D-myo-inositol 1,2,4,5,6-pentakisphosphate + phosphate. The enzyme catalyses 1D-myo-inositol 1,2,4,5,6-pentakisphosphate + H2O = 1D-myo-inositol 1,2,5,6-tetrakisphosphate + phosphate. The catalysed reaction is 1D-myo-inositol 1,2,5,6-tetrakisphosphate + H2O = 1D-myo-inositol 1,2,6-trisphosphate + phosphate. It catalyses the reaction 1D-myo-inositol 1,2,6-trisphosphate + H2O = 1D-myo-inositol 1,2-bisphosphate + phosphate. It carries out the reaction 1D-myo-inositol 1,2-bisphosphate + H2O = 1D-myo-inositol 2-phosphate + phosphate. The enzyme catalyses 1D-myo-inositol hexakisphosphate + H2O = 1D-myo-inositol 1,2,3,5,6-pentakisphosphate + phosphate. The catalysed reaction is 1D-myo-inositol 1,2,3,5,6-pentakisphosphate + H2O = 1D-myo-inositol 1,2,3,6-tetrakisphosphate + phosphate. It catalyses the reaction 1D-myo-inositol 1,2,3,6-tetrakisphosphate + H2O = 1D-myo-inositol 1,2,3-trisphosphate + phosphate. It carries out the reaction 1D-myo-inositol 1,2,3-trisphosphate + H2O = 1D-myo-inositol 2,3-bisphosphate + phosphate. The enzyme catalyses 1D-myo-inositol 2,3-bisphosphate + H2O = 1D-myo-inositol 2-phosphate + phosphate. The catalysed reaction is 1D-myo-inositol 1,3,4,5,6-pentakisphosphate + H2O = 1D-myo-inositol 1,4,5,6-tetrakisphosphate + phosphate. It catalyses the reaction 1D-myo-inositol 1,4,5,6-tetrakisphosphate + H2O = 1D-myo-inositol 1,4,5-trisphosphate + phosphate. It carries out the reaction (2R)-2,3-bisphosphoglycerate + H2O = (2R)-2-phosphoglycerate + phosphate. Its function is as follows. Multiple inositol polyphosphate phosphatase that hydrolyzes 1D-myo-inositol 1,3,4,5,6-pentakisphosphate (InsP5[2OH]) and 1D-myo-inositol hexakisphosphate (InsP6) to a range of less phosphorylated inositol phosphates. This regulates the availability of these various small molecule second messengers and metal chelators which control many aspects of cell physiology. Has a weak in vitro activity towards 1D-myo-inositol 1,4,5-trisphosphate which is unlikely to be physiologically relevant. By regulating intracellular inositol polyphosphates pools, which act as metal chelators, it may control the availability of intracellular calcium and iron, which are important for proper neuronal development and homeostasis. May have a dual substrate specificity, and function as a 2,3-bisphosphoglycerate 3-phosphatase hydrolyzing 2,3-bisphosphoglycerate to 2-phosphoglycerate. 2,3-bisphosphoglycerate (BPG) is formed as part of the Rapoport-Luebering glycolytic bypass and is a regulator of systemic oxygen homeostasis as the major allosteric effector of hemoglobin. In Gallus gallus (Chicken), this protein is Multiple inositol polyphosphate phosphatase 1 (MINPP1).